We begin with the raw amino-acid sequence, 315 residues long: Ribosomal RNA small subunit methyltransferase H (315 aa).

Residues 35–37 (GGH), D55, F79, D101, and Q108 contribute to the S-adenosyl-L-methionine site.

Belongs to the methyltransferase superfamily. RsmH family.

Its subcellular location is the cytoplasm. It catalyses the reaction cytidine(1402) in 16S rRNA + S-adenosyl-L-methionine = N(4)-methylcytidine(1402) in 16S rRNA + S-adenosyl-L-homocysteine + H(+). Functionally, specifically methylates the N4 position of cytidine in position 1402 (C1402) of 16S rRNA. The chain is Ribosomal RNA small subunit methyltransferase H from Photobacterium profundum (strain SS9).